Reading from the N-terminus, the 484-residue chain is Putative cysteine ligase BshC (484 aa).

The stretch at Arg-372–His-435 forms a coiled coil.

It belongs to the BshC family.

This Thermus thermophilus (strain ATCC BAA-163 / DSM 7039 / HB27) protein is Putative cysteine ligase BshC.